Here is a 441-residue protein sequence, read N- to C-terminus: Methylenetetrahydrofolate--tRNA-(uracil-5-)-methyltransferase TrmFO (441 aa).

7–12 contributes to the FAD binding site; sequence GAGLSG.

This sequence belongs to the MnmG family. TrmFO subfamily. FAD serves as cofactor.

The protein resides in the cytoplasm. The catalysed reaction is uridine(54) in tRNA + (6R)-5,10-methylene-5,6,7,8-tetrahydrofolate + NADH + H(+) = 5-methyluridine(54) in tRNA + (6S)-5,6,7,8-tetrahydrofolate + NAD(+). The enzyme catalyses uridine(54) in tRNA + (6R)-5,10-methylene-5,6,7,8-tetrahydrofolate + NADPH + H(+) = 5-methyluridine(54) in tRNA + (6S)-5,6,7,8-tetrahydrofolate + NADP(+). Functionally, catalyzes the folate-dependent formation of 5-methyl-uridine at position 54 (M-5-U54) in all tRNAs. This is Methylenetetrahydrofolate--tRNA-(uracil-5-)-methyltransferase TrmFO from Pseudothermotoga lettingae (strain ATCC BAA-301 / DSM 14385 / NBRC 107922 / TMO) (Thermotoga lettingae).